A 102-amino-acid polypeptide reads, in one-letter code: Large ribosomal subunit protein bL21 (102 aa).

The protein belongs to the bacterial ribosomal protein bL21 family. As to quaternary structure, part of the 50S ribosomal subunit. Contacts protein L20.

Its function is as follows. This protein binds to 23S rRNA in the presence of protein L20. This chain is Large ribosomal subunit protein bL21, found in Trichlorobacter lovleyi (strain ATCC BAA-1151 / DSM 17278 / SZ) (Geobacter lovleyi).